Reading from the N-terminus, the 167-residue chain is Photosystem I assembly protein Ycf3 (167 aa).

3 TPR repeats span residues 35–68, 72–105, and 120–153; these read AFTY…EIDP, SYIL…NPSL, and GEQA…APGN.

The protein belongs to the Ycf3 family.

The protein localises to the plastid. It localises to the chloroplast thylakoid membrane. Its function is as follows. Essential for the assembly of the photosystem I (PSI) complex. May act as a chaperone-like factor to guide the assembly of the PSI subunits. The protein is Photosystem I assembly protein Ycf3 of Chara vulgaris (Common stonewort).